The primary structure comprises 219 residues: Proline-rich protein 27 (219 aa).

The first 15 residues, 1–15 (MKLLLWACIVCVAFA), serve as a signal peptide directing secretion. Residues 155–204 (AAEPAAEAPVGAEPAAEAPVAAEPAAEAPVGVEPAAEEPSPAEPATAKPA) are compositionally biased toward low complexity. Residues 155–219 (AAEPAAEAPV…PSPSLEQANQ (65 aa)) are disordered.

Its subcellular location is the secreted. The chain is Proline-rich protein 27 (PRR27) from Homo sapiens (Human).